Consider the following 490-residue polypeptide: Glutamyl-tRNA(Gln) amidotransferase subunit A (490 aa).

Catalysis depends on charge relay system residues lysine 78 and serine 158. Residues 131 to 159 form a disordered region; that stretch reads SNETSRFGPPINPWRRKGDNAGLTPGGSS. The active-site Acyl-ester intermediate is the serine 182.

Belongs to the amidase family. GatA subfamily. Heterotrimer of A, B and C subunits.

It carries out the reaction L-glutamyl-tRNA(Gln) + L-glutamine + ATP + H2O = L-glutaminyl-tRNA(Gln) + L-glutamate + ADP + phosphate + H(+). Its function is as follows. Allows the formation of correctly charged Gln-tRNA(Gln) through the transamidation of misacylated Glu-tRNA(Gln) in organisms which lack glutaminyl-tRNA synthetase. The reaction takes place in the presence of glutamine and ATP through an activated gamma-phospho-Glu-tRNA(Gln). This is Glutamyl-tRNA(Gln) amidotransferase subunit A from Hyphomonas neptunium (strain ATCC 15444).